A 563-amino-acid chain; its full sequence is Urocanate hydratase (563 aa).

NAD(+) is bound by residues Gly-53–Gly-54, Gln-131, Gly-177–Gly-179, Glu-197, Arg-202, Asn-243–Ala-244, Gln-264–His-268, Tyr-274–Leu-275, and Tyr-323. Cys-411 is a catalytic residue. Gly-493 is a binding site for NAD(+).

This sequence belongs to the urocanase family. NAD(+) serves as cofactor.

The protein resides in the cytoplasm. It carries out the reaction 4-imidazolone-5-propanoate = trans-urocanate + H2O. It participates in amino-acid degradation; L-histidine degradation into L-glutamate; N-formimidoyl-L-glutamate from L-histidine: step 2/3. Functionally, catalyzes the conversion of urocanate to 4-imidazolone-5-propionate. This is Urocanate hydratase from Yersinia enterocolitica serotype O:8 / biotype 1B (strain NCTC 13174 / 8081).